Consider the following 403-residue polypeptide: MSHKIMAINAGSSSLKFQLLDMPQGKLLCQGLIERIGMANAGITLKAQEQKWQQTAPVADHREAVTLLLDMLTGHGIIRSIAEIEGVGHRVAHGGETFKDSARVTDETLAEIERLAELAPLHNPVNLLGINVFRQLLPDVPAVAVFDTAFHQTLNEAAYIYPLPWRYYEEFGIRRYGFHGTSHKYVSATLAEKLGVPLSALRVVSCHLGNGSSLCAIKGGKSVNTSMGFTPQSGVMMGTRSGDIDPSILPWLAQREGKTPQQLNQLLNNESGLLGVSGVSHDYRDVEQAADAGNPRAALALTLFAERIRATIGSYIMQMGGLDALVFTGGIGENSARARAAICQNLQFLGLSVDEAKNQRNATFIQADHALVKVAVINTNEELMIARDVMRIALAETPVAASA.

Belongs to the acetokinase family. PduW subfamily.

It localises to the cytoplasm. It catalyses the reaction propanoate + ATP = propanoyl phosphate + ADP. The protein operates within polyol metabolism; 1,2-propanediol degradation. Works with phosphate acetyltransferase (pta) to capture exogenous propionate and regenerate propionyl-CoA during degradation of 1,2-propanediol (1,2-PD). The sequence is that of Propionate kinase from Citrobacter rodentium (strain ICC168) (Citrobacter freundii biotype 4280).